The chain runs to 539 residues: Chaperonin GroEL 2 (539 aa).

ATP contacts are provided by residues threonine 29–proline 32, aspartate 86–threonine 90, glycine 413, asparagine 477–alanine 479, and aspartate 493. Positions valine 519–histidine 539 are disordered.

Belongs to the chaperonin (HSP60) family. As to quaternary structure, forms a cylinder of 14 subunits composed of two heptameric rings stacked back-to-back. Interacts with the co-chaperonin GroES.

It is found in the cytoplasm. It catalyses the reaction ATP + H2O + a folded polypeptide = ADP + phosphate + an unfolded polypeptide.. Its function is as follows. Together with its co-chaperonin GroES, plays an essential role in assisting protein folding. The GroEL-GroES system forms a nano-cage that allows encapsulation of the non-native substrate proteins and provides a physical environment optimized to promote and accelerate protein folding. The sequence is that of Chaperonin GroEL 2 from Saccharopolyspora erythraea (strain ATCC 11635 / DSM 40517 / JCM 4748 / NBRC 13426 / NCIMB 8594 / NRRL 2338).